A 284-amino-acid chain; its full sequence is MLIVETVPILRREIRRWRQEGKRIALVPTMGNLHDGHMTLVDTAKGQADIVIVSIFVNPMQFNRPDDLAKYPRTLQEDCEKLHQHGVNLVFAPADKEIYPDGMEHQTYVDVPELSTMLEGASRPGHFRGVSTVVSKLFNLVQPDLTYFGEKDFQQLQLIRKMIADLAYDITLVSVPTVRDQNGLALSSRNNNLTADEHRIAPELSKIMRSIAEKMAQGERHTEQLLTQASSQLHEAGFVPDELFIRDAETLAPLNTESKKAVILMAAWLGQTRMIDNQQVDLTQ.

Residue 30–37 (MGNLHDGH) participates in ATP binding. The active-site Proton donor is the histidine 37. (R)-pantoate is bound at residue glutamine 61. Beta-alanine is bound at residue glutamine 61. 149 to 152 (GEKD) serves as a coordination point for ATP. Glutamine 155 is a (R)-pantoate binding site. ATP-binding positions include valine 178 and 186–189 (LSSR).

Belongs to the pantothenate synthetase family. As to quaternary structure, homodimer.

The protein localises to the cytoplasm. The enzyme catalyses (R)-pantoate + beta-alanine + ATP = (R)-pantothenate + AMP + diphosphate + H(+). It participates in cofactor biosynthesis; (R)-pantothenate biosynthesis; (R)-pantothenate from (R)-pantoate and beta-alanine: step 1/1. In terms of biological role, catalyzes the condensation of pantoate with beta-alanine in an ATP-dependent reaction via a pantoyl-adenylate intermediate. The polypeptide is Pantothenate synthetase (Photorhabdus laumondii subsp. laumondii (strain DSM 15139 / CIP 105565 / TT01) (Photorhabdus luminescens subsp. laumondii)).